The chain runs to 189 residues: dCTP deaminase (189 aa).

Residues 112 to 117 (KSTYAR), 136 to 138 (TLE), Gln-157, Tyr-171, and Gln-181 each bind dCTP. The active-site Proton donor/acceptor is the Glu-138.

The protein belongs to the dCTP deaminase family. Homotrimer.

The enzyme catalyses dCTP + H2O + H(+) = dUTP + NH4(+). The protein operates within pyrimidine metabolism; dUMP biosynthesis; dUMP from dCTP (dUTP route): step 1/2. Functionally, catalyzes the deamination of dCTP to dUTP. In Burkholderia thailandensis (strain ATCC 700388 / DSM 13276 / CCUG 48851 / CIP 106301 / E264), this protein is dCTP deaminase.